The sequence spans 588 residues: Proline--tRNA ligase (588 aa).

This sequence belongs to the class-II aminoacyl-tRNA synthetase family. ProS type 1 subfamily. As to quaternary structure, homodimer.

The protein localises to the cytoplasm. It carries out the reaction tRNA(Pro) + L-proline + ATP = L-prolyl-tRNA(Pro) + AMP + diphosphate. Functionally, catalyzes the attachment of proline to tRNA(Pro) in a two-step reaction: proline is first activated by ATP to form Pro-AMP and then transferred to the acceptor end of tRNA(Pro). As ProRS can inadvertently accommodate and process non-cognate amino acids such as alanine and cysteine, to avoid such errors it has two additional distinct editing activities against alanine. One activity is designated as 'pretransfer' editing and involves the tRNA(Pro)-independent hydrolysis of activated Ala-AMP. The other activity is designated 'posttransfer' editing and involves deacylation of mischarged Ala-tRNA(Pro). The misacylated Cys-tRNA(Pro) is not edited by ProRS. The chain is Proline--tRNA ligase from Corynebacterium glutamicum (strain ATCC 13032 / DSM 20300 / JCM 1318 / BCRC 11384 / CCUG 27702 / LMG 3730 / NBRC 12168 / NCIMB 10025 / NRRL B-2784 / 534).